The chain runs to 298 residues: TLR adapter interacting with SLC15A4 on the lysosome (298 aa).

A pLxIS motif motif is present at residues 287–291 (SLHIS). Position 291 is a phosphoserine (serine 291).

Interacts (via pLxIS motif) with IRF5; leading to IRF5 activation. Interacts with SLC15A4; leading to its recruitment to endolysosome. The phosphorylated pLxIS motif constitutes an IRF5-binding motif, leading to recruitment of the transcription factor IRF5 to induce type-I interferons and other cytokines.

The protein localises to the lysosome membrane. It is found in the endosome membrane. It localises to the nucleus. The protein resides in the cytoplasm. Its function is as follows. Innate immune adapter that mediates the recruitment and activation of IRF5 downstream of endolysosomal toll-like receptors TLR7, TLR8 and TLR9. Following recruitment to endolysosome by SLC15A4 downstream of TLR7, TLR8 and TLR9, specifically recruits IRF5 transcription factor via its pLxIS motif, leading to IRF5 activation and subsequent expression of type I interferons. Plays a role in the regulation of endolysosomal pH in immune cells such as B-cells, dendritic cells and monocytes. The protein is TLR adapter interacting with SLC15A4 on the lysosome of Mus musculus (Mouse).